We begin with the raw amino-acid sequence, 355 residues long: Probable nitronate monooxygenase (355 aa).

FMN-binding positions include asparagine 71, glutamine 175, glycine 180, glycine 218, and 237–240 (QMGT).

Belongs to the nitronate monooxygenase family. NMO class I subfamily. FMN is required as a cofactor.

The enzyme catalyses 3 propionate 3-nitronate + 3 O2 + H2O = 3 3-oxopropanoate + 2 nitrate + nitrite + H2O2 + 3 H(+). Nitronate monooxygenase that uses molecular oxygen to catalyze the oxidative denitrification of alkyl nitronates. Acts on propionate 3-nitronate (P3N), the presumed physiological substrate. Probably functions in the detoxification of P3N, a metabolic poison produced by plants and fungi as a defense mechanism. The polypeptide is Probable nitronate monooxygenase (Staphylococcus aureus (strain JH1)).